The sequence spans 248 residues: Thioesterase FSL2 (248 aa).

Active-site charge relay system residues include serine 125, aspartate 195, and histidine 223.

Belongs to the LovG family.

It participates in secondary metabolite biosynthesis. In terms of biological role, thioesterase; part of the gene cluster that mediates the biosynthesis of fusarielins F, G and H, decaketide compounds with 5 methylations and a decaline core that act as mycoestrogens as they stimulate growth of MCF-7 breast cancer cells. The initial compound in the pathway is produced by the reducing polyketide synthase FSL1. FSL1 lacks an active enoyl reductase (ER) domain and biosynthesis of fusarielins relies on the trans-acting enoyl reductase FSL5, before it is released through hydrolysis catalyzed by the thioesterase FSL2. Fusarielins F, G, and H have a C11=C12 cis double bond and is fully reduced between C10 and C11 and between C12 and C13. FSL3 can be involved in the formation of the C11=C12 cis double bond by moving a hypothetical C10=C11 or C12=C13 trans double bond to form prefusarielin. Prefusarielin is oxygenated at C15 and C16 by the cytochrome P450 monooxygenase FSL4, resulting in fusarielin F, which subsequently is epoxidized into fusarielin G by the same enzyme. The final step in the pathway is a reduction of the carboxylic acid moiety to yield fusarielin H via a still undetermined mechanism. This is Thioesterase FSL2 from Gibberella zeae (strain ATCC MYA-4620 / CBS 123657 / FGSC 9075 / NRRL 31084 / PH-1) (Wheat head blight fungus).